The chain runs to 185 residues: Large ribosomal subunit protein uL5c (185 aa).

This sequence belongs to the universal ribosomal protein uL5 family. Part of the 50S ribosomal subunit; contacts the 5S rRNA.

It localises to the plastid. It is found in the chloroplast. Its function is as follows. Binds 5S rRNA, forms part of the central protuberance of the 50S subunit. The protein is Large ribosomal subunit protein uL5c (rpl5) of Chlorokybus atmophyticus (Soil alga).